The primary structure comprises 129 residues: Glycine cleavage system H protein (129 aa).

A Lipoyl-binding domain is found at 23 to 104; that stretch reads TATIGITQHA…AYAAWLFRLK (82 aa). Lys-64 is subject to N6-lipoyllysine.

It belongs to the GcvH family. As to quaternary structure, the glycine cleavage system is composed of four proteins: P, T, L and H. Requires (R)-lipoate as cofactor.

The glycine cleavage system catalyzes the degradation of glycine. The H protein shuttles the methylamine group of glycine from the P protein to the T protein. This is Glycine cleavage system H protein from Nitrosospira multiformis (strain ATCC 25196 / NCIMB 11849 / C 71).